Consider the following 888-residue polypeptide: Valine--tRNA ligase (888 aa).

Positions Pro-43 to His-53 match the 'HIGH' region motif. The 'KMSKS' region motif lies at Lys-534–Ser-538. Lys-537 contributes to the ATP binding site.

Belongs to the class-I aminoacyl-tRNA synthetase family. ValS type 2 subfamily.

The protein localises to the cytoplasm. It carries out the reaction tRNA(Val) + L-valine + ATP = L-valyl-tRNA(Val) + AMP + diphosphate. Catalyzes the attachment of valine to tRNA(Val). As ValRS can inadvertently accommodate and process structurally similar amino acids such as threonine, to avoid such errors, it has a 'posttransfer' editing activity that hydrolyzes mischarged Thr-tRNA(Val) in a tRNA-dependent manner. The protein is Valine--tRNA ligase of Thermococcus kodakarensis (strain ATCC BAA-918 / JCM 12380 / KOD1) (Pyrococcus kodakaraensis (strain KOD1)).